A 115-amino-acid chain; its full sequence is MGSFWDAFAVYDKKKHADPSVYGGNHNNTGDSKTQVMFSKEYRQPRTHQQENLQSMRRSSIGSQDSSDVEDVKEGRLPAEVEIPKNVDISNMSQGEFLRLYESLRRGEPDNKVNR.

Positions histidine 16–leucine 77 are disordered. 2 stretches are compositionally biased toward polar residues: residues asparagine 25 to methionine 37 and glutamine 50 to serine 66.

The protein belongs to the SPG4 family.

Stationary phase-essential protein not required for growth on nonfermentable carbon sources. This chain is Stationary phase protein 4 (SPG4), found in Saccharomyces cerevisiae (strain RM11-1a) (Baker's yeast).